The chain runs to 297 residues: Probable endonuclease 4 (297 aa).

9 residues coordinate Zn(2+): His68, His109, Glu144, Asp178, His181, His213, Asp226, His228, and Glu258.

The protein belongs to the AP endonuclease 2 family. It depends on Zn(2+) as a cofactor.

It catalyses the reaction Endonucleolytic cleavage to 5'-phosphooligonucleotide end-products.. In terms of biological role, endonuclease IV plays a role in DNA repair. It cleaves phosphodiester bonds at apurinic or apyrimidinic (AP) sites, generating a 3'-hydroxyl group and a 5'-terminal sugar phosphate. This chain is Probable endonuclease 4, found in Enterococcus faecalis (strain ATCC 700802 / V583).